Consider the following 247-residue polypeptide: NAD(P)H-quinone oxidoreductase subunit K (247 aa).

[4Fe-4S] cluster contacts are provided by cysteine 63, cysteine 64, cysteine 128, and cysteine 159. The disordered stretch occupies residues 218-247; sequence TRQAPPKELTEAIGMEVPPALASQKQKEEA.

This sequence belongs to the complex I 20 kDa subunit family. NDH-1 can be composed of about 15 different subunits; different subcomplexes with different compositions have been identified which probably have different functions. It depends on [4Fe-4S] cluster as a cofactor.

Its subcellular location is the cellular thylakoid membrane. It carries out the reaction a plastoquinone + NADH + (n+1) H(+)(in) = a plastoquinol + NAD(+) + n H(+)(out). It catalyses the reaction a plastoquinone + NADPH + (n+1) H(+)(in) = a plastoquinol + NADP(+) + n H(+)(out). NDH-1 shuttles electrons from an unknown electron donor, via FMN and iron-sulfur (Fe-S) centers, to quinones in the respiratory and/or the photosynthetic chain. The immediate electron acceptor for the enzyme in this species is believed to be plastoquinone. Couples the redox reaction to proton translocation, and thus conserves the redox energy in a proton gradient. Cyanobacterial NDH-1 also plays a role in inorganic carbon-concentration. The polypeptide is NAD(P)H-quinone oxidoreductase subunit K (Crocosphaera subtropica (strain ATCC 51142 / BH68) (Cyanothece sp. (strain ATCC 51142))).